The chain runs to 202 residues: Pyridoxal 5'-phosphate synthase subunit PdxT (202 aa).

50-52 (GES) serves as a coordination point for L-glutamine. Catalysis depends on C82, which acts as the Nucleophile. L-glutamine-binding positions include R111 and 140–141 (IR). Catalysis depends on charge relay system residues H176 and E178.

Belongs to the glutaminase PdxT/SNO family. As to quaternary structure, in the presence of PdxS, forms a dodecamer of heterodimers. Only shows activity in the heterodimer.

It catalyses the reaction aldehydo-D-ribose 5-phosphate + D-glyceraldehyde 3-phosphate + L-glutamine = pyridoxal 5'-phosphate + L-glutamate + phosphate + 3 H2O + H(+). The catalysed reaction is L-glutamine + H2O = L-glutamate + NH4(+). It participates in cofactor biosynthesis; pyridoxal 5'-phosphate biosynthesis. In terms of biological role, catalyzes the hydrolysis of glutamine to glutamate and ammonia as part of the biosynthesis of pyridoxal 5'-phosphate. The resulting ammonia molecule is channeled to the active site of PdxS. The protein is Pyridoxal 5'-phosphate synthase subunit PdxT of Streptomyces coelicolor (strain ATCC BAA-471 / A3(2) / M145).